Consider the following 341-residue polypeptide: Anthranilate phosphoribosyltransferase (341 aa).

Residues Gly-79, 82–83, Thr-87, 89–92, 107–115, and Ser-119 contribute to the 5-phospho-alpha-D-ribose 1-diphosphate site; these read GD, NIST, and KHGNRAVSS. Position 79 (Gly-79) interacts with anthranilate. Ser-91 serves as a coordination point for Mg(2+). An anthranilate-binding site is contributed by Asn-110. An anthranilate-binding site is contributed by Arg-165. Asp-224 and Glu-225 together coordinate Mg(2+).

Belongs to the anthranilate phosphoribosyltransferase family. Homodimer. Mg(2+) serves as cofactor.

It catalyses the reaction N-(5-phospho-beta-D-ribosyl)anthranilate + diphosphate = 5-phospho-alpha-D-ribose 1-diphosphate + anthranilate. It functions in the pathway amino-acid biosynthesis; L-tryptophan biosynthesis; L-tryptophan from chorismate: step 2/5. Catalyzes the transfer of the phosphoribosyl group of 5-phosphorylribose-1-pyrophosphate (PRPP) to anthranilate to yield N-(5'-phosphoribosyl)-anthranilate (PRA). This Bacillus cereus (strain AH187) protein is Anthranilate phosphoribosyltransferase.